A 347-amino-acid chain; its full sequence is Phenylalanine--tRNA ligase alpha subunit (347 aa).

E261 lines the Mg(2+) pocket.

Belongs to the class-II aminoacyl-tRNA synthetase family. Phe-tRNA synthetase alpha subunit type 1 subfamily. As to quaternary structure, tetramer of two alpha and two beta subunits. It depends on Mg(2+) as a cofactor.

The protein localises to the cytoplasm. It catalyses the reaction tRNA(Phe) + L-phenylalanine + ATP = L-phenylalanyl-tRNA(Phe) + AMP + diphosphate + H(+). This is Phenylalanine--tRNA ligase alpha subunit from Streptococcus thermophilus (strain ATCC BAA-491 / LMD-9).